The chain runs to 421 residues: Serine--tRNA ligase (421 aa).

Residue 225-227 (TAE) coordinates L-serine. Residues 256-258 (RSE) and Val-272 each bind ATP. Glu-279 contributes to the L-serine binding site. An ATP-binding site is contributed by 345–348 (ETHS). Residue Thr-380 participates in L-serine binding.

It belongs to the class-II aminoacyl-tRNA synthetase family. Type-1 seryl-tRNA synthetase subfamily. As to quaternary structure, homodimer. The tRNA molecule binds across the dimer.

Its subcellular location is the cytoplasm. It catalyses the reaction tRNA(Ser) + L-serine + ATP = L-seryl-tRNA(Ser) + AMP + diphosphate + H(+). It carries out the reaction tRNA(Sec) + L-serine + ATP = L-seryl-tRNA(Sec) + AMP + diphosphate + H(+). It participates in aminoacyl-tRNA biosynthesis; selenocysteinyl-tRNA(Sec) biosynthesis; L-seryl-tRNA(Sec) from L-serine and tRNA(Sec): step 1/1. In terms of biological role, catalyzes the attachment of serine to tRNA(Ser). Is also able to aminoacylate tRNA(Sec) with serine, to form the misacylated tRNA L-seryl-tRNA(Sec), which will be further converted into selenocysteinyl-tRNA(Sec). This chain is Serine--tRNA ligase, found in Thermus thermophilus (strain ATCC 27634 / DSM 579 / HB8).